Consider the following 98-residue polypeptide: Small ribosomal subunit protein eS24 (98 aa).

It belongs to the eukaryotic ribosomal protein eS24 family. In terms of assembly, part of the 30S ribosomal subunit.

The protein is Small ribosomal subunit protein eS24 of Thermococcus kodakarensis (strain ATCC BAA-918 / JCM 12380 / KOD1) (Pyrococcus kodakaraensis (strain KOD1)).